Here is a 308-residue protein sequence, read N- to C-terminus: 1,4-dihydroxy-2-naphthoate octaprenyltransferase (308 aa).

At 1 to 20 the chain is on the cytoplasmic side; that stretch reads MTEQQISRTQAWLESLRPKT. A helical transmembrane segment spans residues 21–41; that stretch reads LPLAFAAIIVGTALAWWQGHF. Position 42 (aspartate 42) is a topological domain, periplasmic. A helical transmembrane segment spans residues 43–63; that stretch reads PLVALLALITAGLLQILSNLA. At 64–97 the chain is on the cytoplasmic side; the sequence is NDYGDAVKGSDKPDRIGPLRGMQKGVITQQEMKR. Residues 98 to 118 form a helical membrane-spanning segment; the sequence is ALIITVVLICLSGLALVAVAC. Over 119–123 the chain is Periplasmic; sequence HTLAD. A helical membrane pass occupies residues 124–144; it reads FVGFLILGGLSIIAAITYTVG. Topologically, residues 145–148 are cytoplasmic; that stretch reads NRPY. A helical membrane pass occupies residues 149–169; sequence GYIGLGDISVLVFFGWLSVMG. Topologically, residues 170-176 are periplasmic; the sequence is SWYLQAH. The helical transmembrane segment at 177-197 threads the bilayer; the sequence is TLIPALILPATACGLLATAVL. Over 198–227 the chain is Cytoplasmic; it reads NINNLRDINSDRENGKNTLVVRLGEVNARR. A helical membrane pass occupies residues 228-247; it reads YHACLLMGSLVCLALFNLFS. At 248 to 250 the chain is on the periplasmic side; the sequence is LHS. Residues 251–270 form a helical membrane-spanning segment; sequence LWGWLFLLAAPLLVKQARYV. At 271 to 286 the chain is on the cytoplasmic side; the sequence is MREMDPVAMRPMLERT. Residues 287 to 307 form a helical membrane-spanning segment; it reads VKGALLTNLLFVLGIFLSQWA. Residue alanine 308 is a topological domain, periplasmic.

Belongs to the MenA family. Type 1 subfamily.

It is found in the cell inner membrane. It catalyses the reaction an all-trans-polyprenyl diphosphate + 1,4-dihydroxy-2-naphthoate + H(+) = a 2-demethylmenaquinol + CO2 + diphosphate. It functions in the pathway quinol/quinone metabolism; menaquinone biosynthesis; menaquinol from 1,4-dihydroxy-2-naphthoate: step 1/2. Functionally, conversion of 1,4-dihydroxy-2-naphthoate (DHNA) to demethylmenaquinone (DMK). Attaches octaprenylpyrophosphate, a membrane-bound 40-carbon side chain to DHNA. The conversion of DHNA to DMK proceeds in three stages: the removal of the carboxyl group of DHNA as CO(2), the attachment of the isoprenoid side chain, and a quinol-to-quinone oxidation, which is thought to be spontaneous. This is 1,4-dihydroxy-2-naphthoate octaprenyltransferase from Escherichia coli (strain K12).